A 332-amino-acid chain; its full sequence is Glycerol-3-phosphate dehydrogenase [NAD(P)+] (332 aa).

Residues Ser-11, Trp-12, Arg-32, Arg-33, and Lys-106 each coordinate NADPH. Sn-glycerol 3-phosphate is bound by residues Lys-106 and Gly-136. Residue Ala-140 participates in NADPH binding. Lys-191, Asp-244, Ser-254, Arg-255, and Asn-256 together coordinate sn-glycerol 3-phosphate. Residue Lys-191 is the Proton acceptor of the active site. Arg-255 contacts NADPH. NADPH-binding residues include Val-280 and Glu-282.

This sequence belongs to the NAD-dependent glycerol-3-phosphate dehydrogenase family.

Its subcellular location is the cytoplasm. It catalyses the reaction sn-glycerol 3-phosphate + NAD(+) = dihydroxyacetone phosphate + NADH + H(+). The catalysed reaction is sn-glycerol 3-phosphate + NADP(+) = dihydroxyacetone phosphate + NADPH + H(+). The protein operates within membrane lipid metabolism; glycerophospholipid metabolism. Functionally, catalyzes the reduction of the glycolytic intermediate dihydroxyacetone phosphate (DHAP) to sn-glycerol 3-phosphate (G3P), the key precursor for phospholipid synthesis. This chain is Glycerol-3-phosphate dehydrogenase [NAD(P)+], found in Corynebacterium glutamicum (strain R).